The primary structure comprises 303 residues: Diaminopimelate epimerase (303 aa).

Asn-15, Gln-47, and Asn-67 together coordinate substrate. The active-site Proton donor is Cys-76. Residues 77–78 (GN), Asn-163, Asn-197, and 215–216 (ER) contribute to the substrate site. Catalysis depends on Cys-224, which acts as the Proton acceptor. 225 to 226 (GS) lines the substrate pocket. A disordered region spans residues 278-303 (FDPATGEWSRDTQGLQGSGNADRGAA).

It belongs to the diaminopimelate epimerase family. In terms of assembly, homodimer.

The protein resides in the cytoplasm. It carries out the reaction (2S,6S)-2,6-diaminopimelate = meso-2,6-diaminopimelate. It participates in amino-acid biosynthesis; L-lysine biosynthesis via DAP pathway; DL-2,6-diaminopimelate from LL-2,6-diaminopimelate: step 1/1. Catalyzes the stereoinversion of LL-2,6-diaminopimelate (L,L-DAP) to meso-diaminopimelate (meso-DAP), a precursor of L-lysine and an essential component of the bacterial peptidoglycan. This is Diaminopimelate epimerase from Brucella melitensis biotype 1 (strain ATCC 23456 / CCUG 17765 / NCTC 10094 / 16M).